The following is a 397-amino-acid chain: Chorismate synthase (397 aa).

NADP(+)-binding residues include Arg40 and Arg46. FMN is bound by residues 129-131, 257-258, Gly302, 317-321, and Arg343; these read RAS, QA, and KPIAT.

Belongs to the chorismate synthase family. As to quaternary structure, homotetramer. FMNH2 is required as a cofactor.

The catalysed reaction is 5-O-(1-carboxyvinyl)-3-phosphoshikimate = chorismate + phosphate. Its pathway is metabolic intermediate biosynthesis; chorismate biosynthesis; chorismate from D-erythrose 4-phosphate and phosphoenolpyruvate: step 7/7. Its function is as follows. Catalyzes the anti-1,4-elimination of the C-3 phosphate and the C-6 proR hydrogen from 5-enolpyruvylshikimate-3-phosphate (EPSP) to yield chorismate, which is the branch point compound that serves as the starting substrate for the three terminal pathways of aromatic amino acid biosynthesis. This reaction introduces a second double bond into the aromatic ring system. This is Chorismate synthase from Prosthecochloris aestuarii (strain DSM 271 / SK 413).